Consider the following 67-residue polypeptide: Large ribosomal subunit protein bL28 (67 aa).

This sequence belongs to the bacterial ribosomal protein bL28 family.

The polypeptide is Large ribosomal subunit protein bL28 (Nitratiruptor sp. (strain SB155-2)).